Consider the following 554-residue polypeptide: Chaperonin GroEL (554 aa).

Residues 30–33 (TLGP), lysine 51, 87–91 (DGTTT), glycine 415, 479–481 (NAA), and aspartate 495 each bind ATP.

This sequence belongs to the chaperonin (HSP60) family. As to quaternary structure, forms a cylinder of 14 subunits composed of two heptameric rings stacked back-to-back. Interacts with the co-chaperonin GroES.

The protein localises to the cytoplasm. The catalysed reaction is ATP + H2O + a folded polypeptide = ADP + phosphate + an unfolded polypeptide.. Its function is as follows. Together with its co-chaperonin GroES, plays an essential role in assisting protein folding. The GroEL-GroES system forms a nano-cage that allows encapsulation of the non-native substrate proteins and provides a physical environment optimized to promote and accelerate protein folding. The chain is Chaperonin GroEL from Nitrosococcus oceani (strain ATCC 19707 / BCRC 17464 / JCM 30415 / NCIMB 11848 / C-107).